Consider the following 236-residue polypeptide: Biosynthetic peptidoglycan transglycosylase (236 aa).

A helical membrane pass occupies residues 20–40 (GLVVAAVLALIPTMLTFLYLP).

Belongs to the glycosyltransferase 51 family.

It is found in the cell inner membrane. The catalysed reaction is [GlcNAc-(1-&gt;4)-Mur2Ac(oyl-L-Ala-gamma-D-Glu-L-Lys-D-Ala-D-Ala)](n)-di-trans,octa-cis-undecaprenyl diphosphate + beta-D-GlcNAc-(1-&gt;4)-Mur2Ac(oyl-L-Ala-gamma-D-Glu-L-Lys-D-Ala-D-Ala)-di-trans,octa-cis-undecaprenyl diphosphate = [GlcNAc-(1-&gt;4)-Mur2Ac(oyl-L-Ala-gamma-D-Glu-L-Lys-D-Ala-D-Ala)](n+1)-di-trans,octa-cis-undecaprenyl diphosphate + di-trans,octa-cis-undecaprenyl diphosphate + H(+). The protein operates within cell wall biogenesis; peptidoglycan biosynthesis. Peptidoglycan polymerase that catalyzes glycan chain elongation from lipid-linked precursors. In Mesorhizobium japonicum (strain LMG 29417 / CECT 9101 / MAFF 303099) (Mesorhizobium loti (strain MAFF 303099)), this protein is Biosynthetic peptidoglycan transglycosylase.